Here is a 103-residue protein sequence, read N- to C-terminus: Histone H4 (103 aa).

Positions 1–14 (MSGRGKGGKGLGKG) are enriched in gly residues. The tract at residues 1–20 (MSGRGKGGKGLGKGGAKRHR) is disordered. Residues 17–21 (KRHRK) mediate DNA binding.

The protein belongs to the histone H4 family. As to quaternary structure, the nucleosome is a histone octamer containing two molecules each of H2A, H2B, H3 and H4 assembled in one H3-H4 heterotetramer and two H2A-H2B heterodimers. The octamer wraps approximately 147 bp of DNA.

It is found in the nucleus. Its subcellular location is the chromosome. Its function is as follows. Core component of nucleosome. Nucleosomes wrap and compact DNA into chromatin, limiting DNA accessibility to the cellular machineries which require DNA as a template. Histones thereby play a central role in transcription regulation, DNA repair, DNA replication and chromosomal stability. DNA accessibility is regulated via a complex set of post-translational modifications of histones, also called histone code, and nucleosome remodeling. The chain is Histone H4 (H41) from Physarum polycephalum (Slime mold).